The primary structure comprises 346 residues: MAAAQAVEEMRTRVVLGEFGVRNVHTTDFPGNYSGYDDAWDQDRFEKNFRVDVVHMDENSLEFDMVGIDAAIANAFRRILLAEVPTMAVEKVLVYNNTSIVQDEILAHRLGLIPIHADPRLFEYRNQGDEGGTEIDTLQFRLQVRCTRNPHAAKDSSDPNELYVNHRVYTRHMTWVPLGNQADLFPEGAIRPVHDDILIAQLRPGQEIDLLMHCVKGIGKDHAKFSPVATASYRLLPDITLLEPVEGEAAEELSRCFSPGVIEVQEIQGKKVARVANPRLDTFSREVFRNEKLKKVVRLARVRDHFIFSVESTGVLPPDVLVSEAIKVLMGKCQRFLDELDAVQMD.

Position 2 is an N-acetylalanine (A2).

It belongs to the archaeal Rpo3/eukaryotic RPB3 RNA polymerase subunit family. As to quaternary structure, component of the RNA polymerase I and RNA polymerase III complexes consisting of at least 13 and 17 subunits, respectively. Pol I complex consists of a ten-subunit catalytic core composed of POLR1A/RPA1, POLR1B/RPA2, POLR1C/RPAC1, POLR1D/RPAC2, POLR1H/RPA12, POLR2E/RPABC1, POLR2F/RPABC2, POLR2H/RPABC3, POLR2K/RPABC4 and POLR2L/RPABC5; a mobile stalk subunit POLR1F/RPA43 protruding from the core and additional subunits homologous to general transcription factors POLR1E/RPA49 and POLR1G/RPA34. Part of Pol I pre-initiation complex (PIC), in which Pol I core assembles with RRN3 and promoter-bound UTBF and SL1/TIF-IB complex. Pol III complex consists of a ten-subunit catalytic core composed of POLR3A/RPC1, POLR3B/RPC2, POLR1C/RPAC1, POLR1D/RPAC2, POLR3K/RPC10, POLR2E/RPABC1, POLR2F/RPABC2, POLR2H/RPABC3, POLR2K/RPABC4 and POLR2L/RPABC5; a mobile stalk composed of two subunits POLR3H/RPC8 and CRCP/RPC9, protruding from the core and functioning primarily in transcription initiation; and additional subunits homologous to general transcription factors of the RNA polymerase II machinery, POLR3C/RPC3-POLR3F/RPC6-POLR3G/RPC7 heterotrimer required for transcription initiation and POLR3D/RPC4-POLR3E/RPC5 heterodimer involved in both transcription initiation and termination.

It localises to the nucleus. Its subcellular location is the cytoplasm. The protein resides in the cytosol. Its function is as follows. DNA-dependent RNA polymerase catalyzes the transcription of DNA into RNA using the four ribonucleoside triphosphates as substrates. Common component of RNA polymerases I and III which synthesize ribosomal RNA precursors and short non-coding RNAs including 5S rRNA, snRNAs, tRNAs and miRNAs, respectively. POLR1C/RPAC1 is part of the polymerase core and may function as a clamp element that moves to open and close the cleft. In Bos taurus (Bovine), this protein is DNA-directed RNA polymerases I and III subunit RPAC1 (POLR1C).